The following is a 78-amino-acid chain: Acyl carrier protein (78 aa).

In terms of domain architecture, Carrier spans 4–78 (AEIKDKVYDI…QQAIDYIVKK (75 aa)). S39 bears the O-(pantetheine 4'-phosphoryl)serine mark.

This sequence belongs to the acyl carrier protein (ACP) family. 4'-phosphopantetheine is transferred from CoA to a specific serine of apo-ACP by AcpS. This modification is essential for activity because fatty acids are bound in thioester linkage to the sulfhydryl of the prosthetic group.

The protein resides in the cytoplasm. The protein operates within lipid metabolism; fatty acid biosynthesis. In terms of biological role, carrier of the growing fatty acid chain in fatty acid biosynthesis. This is Acyl carrier protein from Chlorobium limicola (strain DSM 245 / NBRC 103803 / 6330).